A 466-amino-acid polypeptide reads, in one-letter code: tRNA-2-methylthio-N(6)-dimethylallyladenosine synthase (466 aa).

Positions 2-118 (KRFYIHTIGC…LPGHIQAVAH (117 aa)) constitute an MTTase N-terminal domain. 6 residues coordinate [4Fe-4S] cluster: cysteine 11, cysteine 47, cysteine 81, cysteine 157, cysteine 161, and cysteine 164. One can recognise a Radical SAM core domain in the interval 143–372 (DSSGVTGFIT…LELQNRITAE (230 aa)). The 79-residue stretch at 375–453 (RALEGRVEQV…AHSLSGIAVG (79 aa)) folds into the TRAM domain.

The protein belongs to the methylthiotransferase family. MiaB subfamily. In terms of assembly, monomer. The cofactor is [4Fe-4S] cluster.

The protein localises to the cytoplasm. The catalysed reaction is N(6)-dimethylallyladenosine(37) in tRNA + (sulfur carrier)-SH + AH2 + 2 S-adenosyl-L-methionine = 2-methylsulfanyl-N(6)-dimethylallyladenosine(37) in tRNA + (sulfur carrier)-H + 5'-deoxyadenosine + L-methionine + A + S-adenosyl-L-homocysteine + 2 H(+). Its function is as follows. Catalyzes the methylthiolation of N6-(dimethylallyl)adenosine (i(6)A), leading to the formation of 2-methylthio-N6-(dimethylallyl)adenosine (ms(2)i(6)A) at position 37 in tRNAs that read codons beginning with uridine. This Desulfosudis oleivorans (strain DSM 6200 / JCM 39069 / Hxd3) (Desulfococcus oleovorans) protein is tRNA-2-methylthio-N(6)-dimethylallyladenosine synthase.